We begin with the raw amino-acid sequence, 1408 residues long: DNA-directed RNA polymerase subunit beta' (1408 aa).

Zn(2+) is bound by residues cysteine 70, cysteine 72, cysteine 85, and cysteine 88. 3 residues coordinate Mg(2+): aspartate 460, aspartate 462, and aspartate 464. Cysteine 814, cysteine 888, cysteine 895, and cysteine 898 together coordinate Zn(2+).

Belongs to the RNA polymerase beta' chain family. The RNAP catalytic core consists of 2 alpha, 1 beta, 1 beta' and 1 omega subunit. When a sigma factor is associated with the core the holoenzyme is formed, which can initiate transcription. Mg(2+) serves as cofactor. It depends on Zn(2+) as a cofactor.

It carries out the reaction RNA(n) + a ribonucleoside 5'-triphosphate = RNA(n+1) + diphosphate. In terms of biological role, DNA-dependent RNA polymerase catalyzes the transcription of DNA into RNA using the four ribonucleoside triphosphates as substrates. This Baumannia cicadellinicola subsp. Homalodisca coagulata protein is DNA-directed RNA polymerase subunit beta'.